Here is a 675-residue protein sequence, read N- to C-terminus: Polyphosphate kinase (675 aa).

An ATP-binding site is contributed by N42. Mg(2+) is bound by residues R372 and R401. H431 serves as the catalytic Phosphohistidine intermediate. Positions 464, 558, and 586 each coordinate ATP.

This sequence belongs to the polyphosphate kinase 1 (PPK1) family. Requires Mg(2+) as cofactor. Post-translationally, an intermediate of this reaction is the autophosphorylated ppk in which a phosphate is covalently linked to a histidine residue through a N-P bond.

It catalyses the reaction [phosphate](n) + ATP = [phosphate](n+1) + ADP. In terms of biological role, catalyzes the reversible transfer of the terminal phosphate of ATP to form a long-chain polyphosphate (polyP). The sequence is that of Polyphosphate kinase from Helicobacter pylori (strain J99 / ATCC 700824) (Campylobacter pylori J99).